A 256-amino-acid polypeptide reads, in one-letter code: 5'-nucleotidase SurE (256 aa).

D8, D9, S39, and N95 together coordinate a divalent metal cation.

The protein belongs to the SurE nucleotidase family. A divalent metal cation is required as a cofactor.

The protein localises to the cytoplasm. It catalyses the reaction a ribonucleoside 5'-phosphate + H2O = a ribonucleoside + phosphate. Its function is as follows. Nucleotidase that shows phosphatase activity on nucleoside 5'-monophosphates. The protein is 5'-nucleotidase SurE of Methanosphaera stadtmanae (strain ATCC 43021 / DSM 3091 / JCM 11832 / MCB-3).